A 346-amino-acid polypeptide reads, in one-letter code: Phosphoribosylformylglycinamidine cyclo-ligase (346 aa).

Belongs to the AIR synthase family.

Its subcellular location is the cytoplasm. It catalyses the reaction 2-formamido-N(1)-(5-O-phospho-beta-D-ribosyl)acetamidine + ATP = 5-amino-1-(5-phospho-beta-D-ribosyl)imidazole + ADP + phosphate + H(+). It participates in purine metabolism; IMP biosynthesis via de novo pathway; 5-amino-1-(5-phospho-D-ribosyl)imidazole from N(2)-formyl-N(1)-(5-phospho-D-ribosyl)glycinamide: step 2/2. In Photorhabdus laumondii subsp. laumondii (strain DSM 15139 / CIP 105565 / TT01) (Photorhabdus luminescens subsp. laumondii), this protein is Phosphoribosylformylglycinamidine cyclo-ligase.